Here is a 507-residue protein sequence, read N- to C-terminus: MQYKDLRDFMSQLEQRGELKRVAAPVSPNLEMTEICDRLLRANGPAVLFEQPRRDNGDIYKVPVLANLFGTTQRVAQGMGASSLEDLRDIGRVLSVLKEPEPPRGLREAGKLFTLAKSVWDMAPKRVSSPACQEIVWEGNDVDLARLPIQTCWPGDAAPLITWGLVVTKGPHKKRQNLGIYRQQVISRNQVIMRWLAHRGGALDFREHALANPGKPFPIAVALGADPATILGAVTPVPDTLSEYQFAGLLRGSRTALASCITPTLSELSVPASAEIILEGHIQPDPNHPSGYQHALEGPYGDHTGYYNEQDWFPVFTIDRITMRRDPIYHSTYTGKPPDEPAVLGVALNEVFVPLLQKQFPEITDFYLPPEGCSYRMALVRMKKQYAGHAKRVMFGVWSFLRQFMYTKFIVVVDDDIDVRDWKEVIWAITTRVDPTRDTVMVDNTPIDYLDFASPVSGLGSKMGIDATDKWPGETTREWGTPITMAPEIKARVDQMWGSLFEEGPGK.

Position 177 (Asn177) interacts with Mn(2+). Residues Ile180–Arg182, Arg194–Leu196, and Arg199–Gly200 contribute to the prenylated FMN site. Residue Glu243 coordinates Mn(2+). The active-site Proton donor is Asp302.

This sequence belongs to the UbiD family. As to quaternary structure, homohexamer. It depends on prenylated FMN as a cofactor. The cofactor is Mn(2+).

It is found in the cell membrane. The enzyme catalyses a 4-hydroxy-3-(all-trans-polyprenyl)benzoate + H(+) = a 2-(all-trans-polyprenyl)phenol + CO2. It participates in cofactor biosynthesis; ubiquinone biosynthesis. In terms of biological role, catalyzes the decarboxylation of 3-octaprenyl-4-hydroxy benzoate to 2-octaprenylphenol, an intermediate step in ubiquinone biosynthesis. The protein is 3-octaprenyl-4-hydroxybenzoate carboxy-lyase of Cupriavidus metallidurans (strain ATCC 43123 / DSM 2839 / NBRC 102507 / CH34) (Ralstonia metallidurans).